Consider the following 162-residue polypeptide: Endoribonuclease YbeY (162 aa).

Residues His128, His132, and His138 each contribute to the Zn(2+) site.

This sequence belongs to the endoribonuclease YbeY family. It depends on Zn(2+) as a cofactor.

It is found in the cytoplasm. Single strand-specific metallo-endoribonuclease involved in late-stage 70S ribosome quality control and in maturation of the 3' terminus of the 16S rRNA. The chain is Endoribonuclease YbeY from Lactococcus lactis subsp. lactis (strain IL1403) (Streptococcus lactis).